The sequence spans 92 residues: DNA-directed RNA polymerase subunit omega (92 aa).

Belongs to the RNA polymerase subunit omega family. The RNAP catalytic core consists of 2 alpha, 1 beta, 1 beta' and 1 omega subunit. When a sigma factor is associated with the core the holoenzyme is formed, which can initiate transcription.

The enzyme catalyses RNA(n) + a ribonucleoside 5'-triphosphate = RNA(n+1) + diphosphate. Promotes RNA polymerase assembly. Latches the N- and C-terminal regions of the beta' subunit thereby facilitating its interaction with the beta and alpha subunits. The protein is DNA-directed RNA polymerase subunit omega of Shewanella baltica (strain OS223).